We begin with the raw amino-acid sequence, 877 residues long: MTTVTPMMAQYLEIKEAYADALLFYRMGDFYEMFFDDAVAAAEALDIALTKRGKHEGEDIPMCGVPVHAAEGYLLTLIRKGFRVAVCEQMESPAEAKKRGSKSVVRRDVVRLVTPGTLTEDALLEARRHNFLVAYAEVRSGAALAWADISTGDFHVMPVTRPRLSPELARLAPSELLVVDEPVFQQLRPLADDHRIPLTPLGKASFDSMAAEKRLCELYKVGSLEGFGTFARAELSAMGALIDYLDITQKGKLPLLQPPVQEAEDRVMQIDAATRRNLELTRSLSGERGGSLLSVIDRTVTPGGARLLEQRLGSPSRNLDVIHARLSALDFCIDHSTLAADLRAALRKTPDLDRALSRLALDRGGPRDLAAIRNGLGQAEAIAALCDGLELPGLIAGACADLNGFDELLGLLDTALVAEPPLLARDGGFIAPGYDSDLDEARELRDKGRGVIAGMQQKYAEHTGIASLKIKHNNVLGYFIETTATHAAKMLNPPLSETYIHRQTTANQVRFTTVELSELETRILNAGNHALEIEKRLYSSLSGAVLEQAARLNIAARGLAELDLATALADLARAENWCRPSVDPSRAFAIEGGRHPVVEHALRRQGGDPFVANDCDLSADKGAAIRLLTGPNMAGKSTYLRQNALITLLAQIGSYVPADSAHIGVVSQLFSRVGASDDLARGRSTFMVEMVETAAILNQADDHALVILDEIGRGTATYDGLSIAWATLEHLHATNRCRALFATHYHELTALAATLDGVENLTVAVKEWEGEVIFLHEVRKGAADRSYGVQVAQLAGLPPSVVARARVVLDQLEKSEREGGKQKALIDDLPLFSAAPPLPPPAPKTSPADAMLKEIHPDELTPRQALEMLYKLKEAAR.

Position 630–637 (630–637 (GPNMAGKS)) interacts with ATP.

Belongs to the DNA mismatch repair MutS family.

In terms of biological role, this protein is involved in the repair of mismatches in DNA. It is possible that it carries out the mismatch recognition step. This protein has a weak ATPase activity. This chain is DNA mismatch repair protein MutS, found in Ruegeria pomeroyi (strain ATCC 700808 / DSM 15171 / DSS-3) (Silicibacter pomeroyi).